The chain runs to 726 residues: AP-1 complex subunit beta-1 (726 aa).

This sequence belongs to the adaptor complexes large subunit family. Adaptor protein complex 1 (AP-1) is a heterotetramer composed of two large adaptins (gamma-type subunit APL4 and beta-type subunit APL2), a medium adaptin (mu-type subunit APM1) and a small adaptin (sigma-type subunit APS1). Interacts with CHC1. Interacts with APM2, probably forming an alternative AP-1-like complex.

It is found in the cell membrane. It localises to the membrane. The protein resides in the coated pit. Functionally, adaptins are components of the adaptor complexes which link clathrin to receptors in coated vesicles. Clathrin-associated protein complexes are believed to interact with the cytoplasmic tails of membrane proteins, leading to their selection and concentration. The AP-1 complex interacts directly with clathrin. This Saccharomyces cerevisiae (strain ATCC 204508 / S288c) (Baker's yeast) protein is AP-1 complex subunit beta-1 (APL2).